The chain runs to 244 residues: Pyridoxal phosphate homeostasis protein (244 aa).

Lys-37 carries the post-translational modification N6-(pyridoxal phosphate)lysine.

This sequence belongs to the pyridoxal phosphate-binding protein YggS/PROSC family.

Pyridoxal 5'-phosphate (PLP)-binding protein, which may be involved in intracellular homeostatic regulation of pyridoxal 5'-phosphate (PLP), the active form of vitamin B6. The polypeptide is Pyridoxal phosphate homeostasis protein (Caenorhabditis elegans).